Here is a 507-residue protein sequence, read N- to C-terminus: WD repeat-containing protein fzy-1 (507 aa).

Disordered stretches follow at residues 1–39 (MNNK…NTNL) and 74–95 (NKEN…SVEG). 2 stretches are compositionally biased toward polar residues: residues 15–24 (VRSSAQQNGL) and 74–86 (NKEN…SEPN). 4 WD repeats span residues 219-258 (TNEG…TTEY), 313-352 (GHCR…GSTV), 364-406 (EHTG…QKVR), and 411-450 (CETG…KLSH).

This sequence belongs to the WD repeat CDC20/Fizzy family.

Its subcellular location is the chromosome. The protein resides in the cytoplasm. Functionally, plays a role in metaphase-anaphase transition during meiosis I. Required for embryonic anterior-posterior axis formation. This is WD repeat-containing protein fzy-1 from Caenorhabditis elegans.